The following is a 251-amino-acid chain: 1-(5-phosphoribosyl)-5-[(5-phosphoribosylamino)methylideneamino] imidazole-4-carboxamide isomerase (251 aa).

The active-site Proton acceptor is aspartate 8. The active-site Proton donor is aspartate 131.

The protein belongs to the HisA/HisF family.

It localises to the cytoplasm. The catalysed reaction is 1-(5-phospho-beta-D-ribosyl)-5-[(5-phospho-beta-D-ribosylamino)methylideneamino]imidazole-4-carboxamide = 5-[(5-phospho-1-deoxy-D-ribulos-1-ylimino)methylamino]-1-(5-phospho-beta-D-ribosyl)imidazole-4-carboxamide. Its pathway is amino-acid biosynthesis; L-histidine biosynthesis; L-histidine from 5-phospho-alpha-D-ribose 1-diphosphate: step 4/9. The sequence is that of 1-(5-phosphoribosyl)-5-[(5-phosphoribosylamino)methylideneamino] imidazole-4-carboxamide isomerase from Burkholderia vietnamiensis (strain G4 / LMG 22486) (Burkholderia cepacia (strain R1808)).